A 682-amino-acid chain; its full sequence is Serine/threonine-protein kinase PLK2 (682 aa).

The segment at alanine 25–serine 67 is disordered. A compositionally biased stretch (polar residues) spans glutamine 36–valine 48. A Protein kinase domain is found at tyrosine 79–phenylalanine 331. ATP contacts are provided by residues leucine 85 to cysteine 93 and lysine 108. The active-site Proton acceptor is aspartate 202. Position 236 is a phosphothreonine (threonine 236). A disordered region spans residues threonine 402–serine 430. POLO box domains follow at residues tryptophan 500–glutamate 578 and tyrosine 598–asparagine 682.

The protein belongs to the protein kinase superfamily. Ser/Thr protein kinase family. CDC5/Polo subfamily. Interacts with CIB1. Interacts with NSF; causing NSF dissociation from GRIA2. In terms of processing, catalytic activity is enhanced by phosphorylation of Thr-236.

It localises to the cytoplasm. The protein resides in the cytoskeleton. The protein localises to the microtubule organizing center. It is found in the centrosome. Its subcellular location is the centriole. It localises to the cell projection. The protein resides in the dendrite. It carries out the reaction L-seryl-[protein] + ATP = O-phospho-L-seryl-[protein] + ADP + H(+). It catalyses the reaction L-threonyl-[protein] + ATP = O-phospho-L-threonyl-[protein] + ADP + H(+). Its activity is regulated as follows. Activated by phosphorylation of Thr-236. Once activated, activity is stimulated by binding target proteins. Functionally, tumor suppressor serine/threonine-protein kinase involved in synaptic plasticity, centriole duplication and G1/S phase transition. Polo-like kinases act by binding and phosphorylating proteins that are already phosphorylated on a specific motif recognized by the POLO box domains. Phosphorylates CPAP, NPM1, RAPGEF2, RASGRF1, SNCA, SIPA1L1 and SYNGAP1. Plays a key role in synaptic plasticity and memory by regulating the Ras and Rap protein signaling: required for overactivity-dependent spine remodeling by phosphorylating the Ras activator RASGRF1 and the Rap inhibitor SIPA1L1 leading to their degradation by the proteasome. Conversely, phosphorylates the Rap activator RAPGEF2 and the Ras inhibitor SYNGAP1, promoting their activity. Also regulates synaptic plasticity independently of kinase activity, via its interaction with NSF that disrupts the interaction between NSF and the GRIA2 subunit of AMPARs, leading to a rapid rundown of AMPAR-mediated current that occludes long term depression. Required for procentriole formation and centriole duplication by phosphorylating CPAP and NPM1, respectively. Its induction by p53/TP53 suggests that it may participate in the mitotic checkpoint following stress. The sequence is that of Serine/threonine-protein kinase PLK2 (Plk2) from Rattus norvegicus (Rat).